The chain runs to 514 residues: Vacuolar aminopeptidase 1 (514 aa).

A propeptide spans Met1–Leu45 (required for vacuolar localization. Mediates aggregation and vesicle formation in Cvt pathway). N-linked (GlcNAc...) asparagine glycans are attached at residues Asn107 and Asn110. Position 132 (His132) interacts with Zn(2+). Residue His210 participates in substrate binding. Zn(2+) is bound by residues Asp303, Glu339, and Glu340. A substrate-binding site is contributed by Glu339. A Phosphoserine modification is found at Ser356. Asp385 serves as a coordination point for Zn(2+). Residues Asp385 and His388 each coordinate substrate. Asn448 carries N-linked (GlcNAc...) asparagine glycosylation. Zn(2+) is bound at residue His479.

Belongs to the peptidase M18 family. Homododecamer. The precursor form of aminopeptidase 1 (prApe1) assembles into dodecamers and further aggregates into higher multimers (the Ape1 complex) in the cytoplasm. The Ape1 complex is disaggregated in the vacuolar lumen, but mature aminopeptidase 1 (mApe1) retains its dodecameric form. Dodecamer assembly in the cytoplasm is essential for formation of an enzymatically active complex. If cytoplasmic homododecamerization of prApe1 is disturbed in mutants, homododecamers of mApe1 will form in the vacuole, but they are enzymatically inactive. Interacts with ATG19. The cofactor is Zn(2+). Synthesized in a precursor form (prApe1) that has an amino-terminal propeptide. The N-terminal extension of the 61 kDa precursor is proteolytically processed in two sequential steps. The first step involves proteinase A (PrA/PEP4) and produces a 55 kDa unstable intermediate (iAPI). The second step involves proteinase B (PrB/PRB1) and converts iAPI into the 50 kDa stable, mature enzyme (mApe1).

The protein resides in the vacuole. It carries out the reaction Release of an N-terminal amino acid, preferably a neutral or hydrophobic one, from a polypeptide. Aminoacyl-arylamides are poor substrates.. Its activity is regulated as follows. Strongly and specifically activated by Cl(-) and Br(-), which act as positive allosteric effectors. Inactivated by metal-chelating agents. Its function is as follows. Resident vacuolar enzyme that catalyzes the removal of amino acids from the N-terminus of peptides and proteins. Also acts as the major cargo protein of the cytoplasm-to-vacuole targeting (Cvt) pathway. The precursor form of aminopeptidase 1 (prApe1) assembles into dodecamers and the propeptide mediates the aggregation of dodecamers into higher multimers. The multimers are then recognized via the propeptide by their receptor ATG19, and ATG19 further interacts with ATG11, which tethers the APE1-ATG19 complex to the pre-autophagosomal structure (PAS). The cargo-receptor complex (also Cvt complex) is selectively enwrapped by a double-membrane structure termed the Cvt vesicle under vegetative growth conditions and by a similar but larger double-membrane structure termed the autophagosome under nitrogen starvation conditions. The Cvt vesicle or the autophagosome fuses with the vacuolar membrane and release its content in the vacuolar lumen. In the vacuole, prApe1 is processed into mature aminopeptidase 1 (mApe1). The protein is Vacuolar aminopeptidase 1 of Saccharomyces cerevisiae (strain ATCC 204508 / S288c) (Baker's yeast).